A 1066-amino-acid polypeptide reads, in one-letter code: UPF0182 protein BL1029 (1066 aa).

Residues glycine 12–serine 74 form a disordered region. The span at asparagine 44 to arginine 61 shows a compositional bias: low complexity. The next 7 helical transmembrane spans lie at serine 77–leucine 97, leucine 126–isoleucine 146, valine 179–tryptophan 199, valine 235–valine 255, leucine 282–phenylalanine 302, valine 326–methionine 346, and valine 372–leucine 392. The tract at residues aspartate 977–tryptophan 1044 is disordered. Positions serine 989 to asparagine 998 are enriched in polar residues. Over residues glycine 1003–aspartate 1016 the composition is skewed to low complexity.

It belongs to the UPF0182 family.

The protein resides in the cell membrane. This chain is UPF0182 protein BL1029, found in Bifidobacterium longum (strain NCC 2705).